Here is a 192-residue protein sequence, read N- to C-terminus: Transmembrane protein 11, mitochondrial (192 aa).

The disordered stretch occupies residues 1–20; the sequence is MAAWGRRRLGPGSSGGSARE. A run of 2 helical transmembrane segments spans residues 84 to 100 and 107 to 124; these read TAVL…LALP and ISLP…LYGI.

Belongs to the TMEM11 family. In terms of assembly, associates with the mitochondrial contact site and cristae organizing system (MICOS) complex, composed of at least MICOS10/MIC10, CHCHD3/MIC19, CHCHD6/MIC25, APOOL/MIC27, IMMT/MIC60, APOO/MIC23/MIC26 and QIL1/MIC13. This complex was also known under the names MINOS or MitOS complex. The MICOS complex associates with mitochondrial outer membrane proteins SAMM50, MTX1, MTX2 and DNAJC11, mitochondrial inner membrane protein TMEM11 and with HSPA9. Interacts with IMMT/MIC60.

It is found in the mitochondrion inner membrane. In terms of biological role, plays a role in mitochondrial morphogenesis. In Homo sapiens (Human), this protein is Transmembrane protein 11, mitochondrial (TMEM11).